A 488-amino-acid polypeptide reads, in one-letter code: Malonate-semialdehyde dehydrogenase (488 aa).

Residues alanine 150, phenylalanine 152, lysine 176, glutamate 179, arginine 180, serine 229, and threonine 251 each coordinate NAD(+). Cysteine 284 serves as the catalytic Nucleophile. Glutamate 382 provides a ligand contact to NAD(+).

This sequence belongs to the aldehyde dehydrogenase family. IolA subfamily. In terms of assembly, homotetramer.

The enzyme catalyses 3-oxopropanoate + NAD(+) + CoA + H2O = hydrogencarbonate + acetyl-CoA + NADH + H(+). It catalyses the reaction 2-methyl-3-oxopropanoate + NAD(+) + CoA + H2O = propanoyl-CoA + hydrogencarbonate + NADH + H(+). Its pathway is polyol metabolism; myo-inositol degradation into acetyl-CoA; acetyl-CoA from myo-inositol: step 7/7. Its function is as follows. Catalyzes the oxidation of malonate semialdehyde (MSA) and methylmalonate semialdehyde (MMSA) into acetyl-CoA and propanoyl-CoA, respectively. Is involved in a myo-inositol catabolic pathway. Bicarbonate, and not CO2, is the end-product of the enzymatic reaction. The protein is Malonate-semialdehyde dehydrogenase of Listeria monocytogenes serotype 4b (strain CLIP80459).